The sequence spans 336 residues: Fructose-1,6-bisphosphatase class 1 (336 aa).

The Mg(2+) site is built by Glu-90, Asp-112, Leu-114, and Asp-115. Substrate contacts are provided by residues 115–118 (DGSS), Asn-211, and Lys-277. Glu-283 is a binding site for Mg(2+).

Belongs to the FBPase class 1 family. Homotetramer. Requires Mg(2+) as cofactor.

It localises to the cytoplasm. The enzyme catalyses beta-D-fructose 1,6-bisphosphate + H2O = beta-D-fructose 6-phosphate + phosphate. Its pathway is carbohydrate biosynthesis; gluconeogenesis. This Pseudomonas fluorescens (strain ATCC BAA-477 / NRRL B-23932 / Pf-5) protein is Fructose-1,6-bisphosphatase class 1.